The primary structure comprises 557 residues: Polypyrimidine tract-binding protein 1 (557 aa).

Methionine 1 is modified (N-acetylmethionine). Phosphoserine is present on serine 16. RRM domains are found at residues 59 to 143 (RVIH…SSPN), 184 to 260 (LRII…FSKL), and 363 to 437 (SVLL…LSKH). Lysine 65 is covalently cross-linked (Glycyl lysine isopeptide (Lys-Gly) (interchain with G-Cter in SUMO2)). Tyrosine 127 carries the post-translational modification Phosphotyrosine. Threonine 138 is subject to Phosphothreonine. Serine 141 is modified (phosphoserine). Lysine 218 participates in a covalent cross-link: Glycyl lysine isopeptide (Lys-Gly) (interchain with G-Cter in SUMO2). Serine 459 is modified (phosphoserine). One can recognise an RRM 4 domain in the interval 480 to 555 (ATLHLSNIPP…HHLRVSFSKS (76 aa)).

In terms of assembly, monomer. Part of a ternary complex containing KHSRP, PTBP1, PTBP2 and HNRPH1. Interacts with RAVER1 and SFPQ. Interacts with IVNS1ABP (via BACK domain); the interaction is direct.

The protein localises to the nucleus. In terms of biological role, plays a role in pre-mRNA splicing and in the regulation of alternative splicing events. Activates exon skipping of its own pre-mRNA during muscle cell differentiation. Binds to the polypyrimidine tract of introns. May promote RNA looping when bound to two separate polypyrimidine tracts in the same pre-mRNA. May promote the binding of U2 snRNP to pre-mRNA. Cooperates with RAVER1 to modulate switching between mutually exclusive exons during maturation of the TPM1 pre-mRNA. Represses the splicing of MAPT/Tau exon 10. Binds to polypyrimidine-rich controlling element (PCE) of CFTR and promotes exon skipping of CFTR exon 9, thereby antagonizing TIA1 and its role in exon inclusion of CFTR exon 9. Plays a role in the splicing of pyruvate kinase PKM by binding repressively to a polypyrimidine tract flanking PKM exon 9, inhibiting exon 9 inclusion and resulting in exon 10 inclusion and production of the PKM M2 isoform. In case of infection by picornaviruses, binds to the viral internal ribosome entry site (IRES) and stimulates the IRES-mediated translation. The protein is Polypyrimidine tract-binding protein 1 (PTBP1) of Homo sapiens (Human).